Consider the following 263-residue polypeptide: MNIISESLRSHPNSCALIPFITAGYPDINTTIQALYELDSQGADIIELGIPYSDALADGSVIQHSSLIALQGGTYIDQVLHILEVVSTKLNTPIIILPYYNPILKRGIEKFIKQISLMGAKGLIVPDLPLEETDELIVICNDNQIELVLFVAPTSSMKRINSISKKSPGCIYLVSSTGVTGVRDDIDIKVMELSNYIKKVSNKFIMLGFGISTPEHIKKIMKWNIDGVVVGSAFVKKLSALKIDDRISSISSLCKSLKKATIL.

Residues glutamate 47 and aspartate 58 each act as proton acceptor in the active site.

It belongs to the TrpA family. In terms of assembly, tetramer of two alpha and two beta chains.

The protein resides in the plastid. It is found in the chloroplast. The enzyme catalyses (1S,2R)-1-C-(indol-3-yl)glycerol 3-phosphate + L-serine = D-glyceraldehyde 3-phosphate + L-tryptophan + H2O. Its pathway is amino-acid biosynthesis; L-tryptophan biosynthesis; L-tryptophan from chorismate: step 5/5. The alpha subunit is responsible for the aldol cleavage of indoleglycerol phosphate to indole and glyceraldehyde 3-phosphate. The sequence is that of Tryptophan synthase alpha chain from Antithamnion sp. (Red alga).